Here is a 426-residue protein sequence, read N- to C-terminus: Phosphomethylpyrimidine synthase (426 aa).

Residues asparagine 65, methionine 94, tyrosine 123, histidine 162, 184–186, 225–228, and glutamate 264 each bind substrate; these read SRG and DGMR. Histidine 268 is a binding site for Zn(2+). Residue tyrosine 291 participates in substrate binding. Histidine 332 is a Zn(2+) binding site. Positions 408, 411, and 415 each coordinate [4Fe-4S] cluster.

It belongs to the ThiC family. [4Fe-4S] cluster is required as a cofactor.

The enzyme catalyses 5-amino-1-(5-phospho-beta-D-ribosyl)imidazole + S-adenosyl-L-methionine = 4-amino-2-methyl-5-(phosphooxymethyl)pyrimidine + CO + 5'-deoxyadenosine + formate + L-methionine + 3 H(+). It participates in cofactor biosynthesis; thiamine diphosphate biosynthesis. Catalyzes the synthesis of the hydroxymethylpyrimidine phosphate (HMP-P) moiety of thiamine from aminoimidazole ribotide (AIR) in a radical S-adenosyl-L-methionine (SAM)-dependent reaction. In Methanococcus maripaludis (strain C5 / ATCC BAA-1333), this protein is Phosphomethylpyrimidine synthase.